The primary structure comprises 536 residues: MNFTESMNVVHARIQQLEPENAAKIFGYLLLMQENGNRDMIRLAFCPDSVMCSVINCVKYELARNSHHYHSPPSDHIPTPKFGSFTGSSPLSVSVSPPMKTGFWENSTEMDTLQNNLQFLNFEDPLTSPEFSNGFFSQERQCLPLRTSRRSPSLPEFPVKICHYFNKGFCKHGNNCRYFHGQIIPERESFAQMFNPNNNLSDEEHVVSPVSLEKLEGEIIELLKLRRGAPISIASLPMMYYEKYGRTLQAEGYLTESQRHGKAGYSLTKLLARLKNTIRLVDRPHGQHSVILAEDASKFVEYTGERNEHGAILAGSRQIYLTFPAESSFTEHDVSIYFTSYGHVEDVRIPCQQKRMYGFVTFASSETVKHILAKGNPHFICNARVLVKPYREKSRSSRYLDNYKPLHGMRYGSKFIERDIEMNTLPPRVSESSRMRKPFLSEPEQSVSKSLPTNYSYLGFSSDDFKLTSNAEQEEQAERLSYLLDYLNTEDNVMNITTNYRDNDRRTHCESLDSQVLNLPESPFSSLSGKEISTVT.

A C3H1-type zinc finger spans residues 156–183 (EFPVKICHYFNKGFCKHGNNCRYFHGQI). Residues 211 to 294 (SLEKLEGEII…HGQHSVILAE (84 aa)) form the HTH OST-type domain. The RRM domain occupies 317–392 (RQIYLTFPAE…ARVLVKPYRE (76 aa)).

In terms of biological role, possesses ribonuclease activity in vitro. This is Zinc finger CCCH domain-containing protein 18 from Arabidopsis thaliana (Mouse-ear cress).